The chain runs to 303 residues: Protoheme IX farnesyltransferase (303 aa).

6 helical membrane passes run 25 to 45, 54 to 74, 118 to 138, 166 to 186, 230 to 250, and 280 to 300; these read MGLV…AIVM, IPQI…ACAL, CLFL…VGYV, IGWV…FLVV, LVLL…FVVI, and FVYS…VSLI.

Belongs to the UbiA prenyltransferase family. Protoheme IX farnesyltransferase subfamily. Interacts with CtaA.

The protein resides in the cell membrane. The enzyme catalyses heme b + (2E,6E)-farnesyl diphosphate + H2O = Fe(II)-heme o + diphosphate. The protein operates within porphyrin-containing compound metabolism; heme O biosynthesis; heme O from protoheme: step 1/1. Its function is as follows. Converts heme B (protoheme IX) to heme O by substitution of the vinyl group on carbon 2 of heme B porphyrin ring with a hydroxyethyl farnesyl side group. The sequence is that of Protoheme IX farnesyltransferase from Staphylococcus epidermidis (strain ATCC 12228 / FDA PCI 1200).